The primary structure comprises 316 residues: Beta-ketoacyl-[acyl-carrier-protein] synthase III (316 aa).

Residues cysteine 112 and histidine 243 contribute to the active site. Residues 244-248 (QANIR) form an ACP-binding region. The active site involves asparagine 273.

This sequence belongs to the thiolase-like superfamily. FabH family. In terms of assembly, homodimer.

It is found in the cytoplasm. The catalysed reaction is malonyl-[ACP] + acetyl-CoA + H(+) = 3-oxobutanoyl-[ACP] + CO2 + CoA. The protein operates within lipid metabolism; fatty acid biosynthesis. Its function is as follows. Catalyzes the condensation reaction of fatty acid synthesis by the addition to an acyl acceptor of two carbons from malonyl-ACP. Catalyzes the first condensation reaction which initiates fatty acid synthesis and may therefore play a role in governing the total rate of fatty acid production. Possesses both acetoacetyl-ACP synthase and acetyl transacylase activities. Its substrate specificity determines the biosynthesis of branched-chain and/or straight-chain of fatty acids. The protein is Beta-ketoacyl-[acyl-carrier-protein] synthase III of Haemophilus ducreyi (strain 35000HP / ATCC 700724).